Here is a 276-residue protein sequence, read N- to C-terminus: uncharacterized protein (276 aa).

The protein to E.cuniculi ECU05_1600/ECU11_0130.

This is an uncharacterized protein from Encephalitozoon cuniculi (strain GB-M1) (Microsporidian parasite).